Reading from the N-terminus, the 345-residue chain is UbiA prenyltransferase domain-containing protein 1 (345 aa).

Helical transmembrane passes span 60 to 80 (LALR…GTAI), 90 to 110 (LLLF…GNLV), 141 to 161 (VRFG…LYFI), 169 to 189 (LALI…GIGF), 213 to 233 (AVQV…LALS), 251 to 273 (QAGI…YNLL), 285 to 305 (ATRY…AFSL), and 324 to 344 (LNLL…AGSL).

Belongs to the UbiA prenyltransferase family.

The protein resides in the endoplasmic reticulum membrane. It is found in the golgi apparatus membrane. Its subcellular location is the mitochondrion membrane. The enzyme catalyses menadiol + (2E,6E,10E)-geranylgeranyl diphosphate = menaquinol-4 + diphosphate. The catalysed reaction is all-trans-decaprenyl diphosphate + 4-hydroxybenzoate = 4-hydroxy-3-(all-trans-decaprenyl)benzoate + diphosphate. It participates in quinol/quinone metabolism; menaquinone biosynthesis. The protein operates within cofactor biosynthesis; ubiquinone biosynthesis. Prenyltransferase that mediates the formation of menaquinone-4 (MK-4) and coenzyme Q10. MK-4 is a vitamin K2 isoform required for endothelial cell development. Mediates the conversion of phylloquinone (PK) into MK-4, probably by cleaving the side chain of phylloquinone (PK) to release 2-methyl-1,4-naphthoquinone (menadione; K3) and then prenylating it with geranylgeranyl pyrophosphate (GGPP) to form MK-4. Also plays a role in cardiovascular development independently of MK-4 biosynthesis, by acting as a coenzyme Q10 biosynthetic enzyme: coenzyme Q10, also named ubiquinone, plays an important antioxidant role in the cardiovascular system. Mediates biosynthesis of coenzyme Q10 in the Golgi membrane, leading to protect cardiovascular tissues from NOS3/eNOS-dependent oxidative stress. The polypeptide is UbiA prenyltransferase domain-containing protein 1 (ubiad1) (Xenopus tropicalis (Western clawed frog)).